We begin with the raw amino-acid sequence, 240 residues long: MSTLLHIDSSVRAVSNTNPDHNSISKSIALRFIETWKQHRPQDEYIYRDVGVNPPDFINQDWVGAVFTPDDKRTPEQKERLALSDKLIDEVSAADVIVISSPMYNYGMPAQLKAWFDQIVRINKTFDFDLSRGDFPLQPILSGKTLITVTSSGEFGFEKGGVREGSGHLAPHLRTLSKYLGVDTMYEIVSEYQEFGDDRHRVSVANAKDRAECLASELSLSTTDSLLKSDSVGSDLGITP.

FMN-binding positions include serine 10 and 23 to 25; that span reads SIS.

The protein belongs to the azoreductase type 1 family. As to quaternary structure, homodimer. The cofactor is FMN.

The enzyme catalyses 2 a quinone + NADH + H(+) = 2 a 1,4-benzosemiquinone + NAD(+). It catalyses the reaction N,N-dimethyl-1,4-phenylenediamine + anthranilate + 2 NAD(+) = 2-(4-dimethylaminophenyl)diazenylbenzoate + 2 NADH + 2 H(+). Quinone reductase that provides resistance to thiol-specific stress caused by electrophilic quinones. Functionally, also exhibits azoreductase activity. Catalyzes the reductive cleavage of the azo bond in aromatic azo compounds to the corresponding amines. The sequence is that of FMN-dependent NADH:quinone oxidoreductase 2 from Idiomarina loihiensis (strain ATCC BAA-735 / DSM 15497 / L2-TR).